A 322-amino-acid polypeptide reads, in one-letter code: uncharacterized protein (322 aa).

Composition is skewed to basic residues over residues 1-16 and 43-61; these read MPGN…KSGT and LRPH…RRPV. The tract at residues 1 to 69 is disordered; that stretch reads MPGNSRRRGA…PVKRADETET (69 aa). Residues Gly-261, Ile-281, and Leu-290 each coordinate S-adenosyl-L-methionine.

The protein belongs to the class IV-like SAM-binding methyltransferase superfamily. RNA methyltransferase TrmH family.

This is an uncharacterized protein from Mycobacterium bovis (strain BCG / Pasteur 1173P2).